Consider the following 246-residue polypeptide: Auxin-responsive protein IAA11 (246 aa).

The EAR-like (transcriptional repression) motif lies at 36 to 40 (LGLTL). One can recognise a PB1 domain in the interval 136–235 (SMFVKVTMDG…SVRRLRIMKT (100 aa)).

Belongs to the Aux/IAA family. Homodimers and heterodimers. Interacts with TPL. As to expression, preferentially expressed in stems and flowers.

The protein localises to the nucleus. In terms of biological role, aux/IAA proteins are short-lived transcriptional factors that function as repressors of early auxin response genes at low auxin concentrations. Repression is thought to result from the interaction with auxin response factors (ARFs), proteins that bind to the auxin-responsive promoter element (AuxRE). Formation of heterodimers with ARF proteins may alter their ability to modulate early auxin response genes expression. The protein is Auxin-responsive protein IAA11 (IAA11) of Arabidopsis thaliana (Mouse-ear cress).